A 348-amino-acid polypeptide reads, in one-letter code: D-alanine--D-alanine ligase (348 aa).

An ATP-grasp domain is found at 132-334; it reads KRVLESADIP…YAELIEELVR (203 aa). 162-217 provides a ligand contact to ATP; the sequence is EAVLSYPVFVKPANMGSSVGISKAESEEELRAAILLALTYDSRILIEQGVLAREIE. 3 residues coordinate Mg(2+): Asp-288, Glu-301, and Asn-303.

Belongs to the D-alanine--D-alanine ligase family. It depends on Mg(2+) as a cofactor. Requires Mn(2+) as cofactor.

It localises to the cytoplasm. It catalyses the reaction 2 D-alanine + ATP = D-alanyl-D-alanine + ADP + phosphate + H(+). It participates in cell wall biogenesis; peptidoglycan biosynthesis. Its function is as follows. Cell wall formation. The chain is D-alanine--D-alanine ligase from Streptococcus equi subsp. zooepidemicus (strain MGCS10565).